The chain runs to 220 residues: Ribosomal RNA large subunit methyltransferase E (220 aa).

Residues Gly60, Trp62, Asp92, Asp108, and Asp133 each coordinate S-adenosyl-L-methionine. Lys173 (proton acceptor) is an active-site residue.

This sequence belongs to the class I-like SAM-binding methyltransferase superfamily. RNA methyltransferase RlmE family.

Its subcellular location is the cytoplasm. The enzyme catalyses uridine(2552) in 23S rRNA + S-adenosyl-L-methionine = 2'-O-methyluridine(2552) in 23S rRNA + S-adenosyl-L-homocysteine + H(+). Its function is as follows. Specifically methylates the uridine in position 2552 of 23S rRNA at the 2'-O position of the ribose in the fully assembled 50S ribosomal subunit. This Paraburkholderia phytofirmans (strain DSM 17436 / LMG 22146 / PsJN) (Burkholderia phytofirmans) protein is Ribosomal RNA large subunit methyltransferase E.